The following is a 102-amino-acid chain: Exocrine gland-secreted peptide 1 (102 aa).

The N-terminal stretch at methionine 1–glycine 22 is a signal peptide. Cysteine 63 and cysteine 95 are joined by a disulfide.

The protein belongs to the exocrine gland-secreted peptide family. In terms of assembly, monomer. Expressed in the extraorbital lacrimal gland from where it is secreted into tears.

It is found in the secreted. Its function is as follows. Male-specific phermone which is recognized by the Vmn2r116/V2rp5 receptor in the vomeronasal organ (VNO) and enhances female sexual receptive behavior (lordosis) upon male mounting, resulting in successful copulation. This Mus musculus (Mouse) protein is Exocrine gland-secreted peptide 1.